A 614-amino-acid chain; its full sequence is Dihydroxy-acid dehydratase (614 aa).

Asp-81 serves as a coordination point for Mg(2+). Cys-122 lines the [2Fe-2S] cluster pocket. Asp-123 and Lys-124 together coordinate Mg(2+). Lys-124 carries the post-translational modification N6-carboxylysine. Residue Cys-193 coordinates [2Fe-2S] cluster. A Mg(2+)-binding site is contributed by Glu-489. The Proton acceptor role is filled by Ser-515.

Belongs to the IlvD/Edd family. In terms of assembly, homodimer. [2Fe-2S] cluster is required as a cofactor. It depends on Mg(2+) as a cofactor.

The catalysed reaction is (2R)-2,3-dihydroxy-3-methylbutanoate = 3-methyl-2-oxobutanoate + H2O. The enzyme catalyses (2R,3R)-2,3-dihydroxy-3-methylpentanoate = (S)-3-methyl-2-oxopentanoate + H2O. Its pathway is amino-acid biosynthesis; L-isoleucine biosynthesis; L-isoleucine from 2-oxobutanoate: step 3/4. The protein operates within amino-acid biosynthesis; L-valine biosynthesis; L-valine from pyruvate: step 3/4. Its function is as follows. Functions in the biosynthesis of branched-chain amino acids. Catalyzes the dehydration of (2R,3R)-2,3-dihydroxy-3-methylpentanoate (2,3-dihydroxy-3-methylvalerate) into 2-oxo-3-methylpentanoate (2-oxo-3-methylvalerate) and of (2R)-2,3-dihydroxy-3-methylbutanoate (2,3-dihydroxyisovalerate) into 2-oxo-3-methylbutanoate (2-oxoisovalerate), the penultimate precursor to L-isoleucine and L-valine, respectively. This is Dihydroxy-acid dehydratase from Hahella chejuensis (strain KCTC 2396).